The sequence spans 256 residues: Putative cysteine-rich repeat secretory protein 21 (256 aa).

The N-terminal stretch at 1–30 is a signal peptide; sequence MYSSVSKRLVSVHILVVVALQLLFIPNVLS. Gnk2-homologous domains follow at residues 37–139 and 145–253; these read YLHH…SIDT and YQNN…LYPF.

This sequence belongs to the cysteine-rich repeat secretory protein family.

It localises to the secreted. In Arabidopsis thaliana (Mouse-ear cress), this protein is Putative cysteine-rich repeat secretory protein 21 (CRRSP21).